We begin with the raw amino-acid sequence, 329 residues long: Holliday junction branch migration complex subunit RuvB (329 aa).

Positions 1 to 180 are large ATPase domain (RuvB-L); it reads MKNILQSTEC…FGIPIHLEFY (180 aa). Residues Arg-20, Gly-61, Lys-64, Thr-65, Thr-66, 127-129, Arg-170, Tyr-180, and Arg-217 each bind ATP; that span reads EDF. Position 65 (Thr-65) interacts with Mg(2+). The interval 181-252 is small ATPAse domain (RuvB-S); the sequence is STEELTKVIQ…FADKALLRLG (72 aa). The head domain (RuvB-H) stretch occupies residues 255-329; sequence KLGLDRQDIQ…ISHLREQEYI (75 aa). Arg-308 and Arg-313 together coordinate DNA.

This sequence belongs to the RuvB family. As to quaternary structure, homohexamer. Forms an RuvA(8)-RuvB(12)-Holliday junction (HJ) complex. HJ DNA is sandwiched between 2 RuvA tetramers; dsDNA enters through RuvA and exits via RuvB. An RuvB hexamer assembles on each DNA strand where it exits the tetramer. Each RuvB hexamer is contacted by two RuvA subunits (via domain III) on 2 adjacent RuvB subunits; this complex drives branch migration. In the full resolvosome a probable DNA-RuvA(4)-RuvB(12)-RuvC(2) complex forms which resolves the HJ.

The protein localises to the cytoplasm. It carries out the reaction ATP + H2O = ADP + phosphate + H(+). In terms of biological role, the RuvA-RuvB-RuvC complex processes Holliday junction (HJ) DNA during genetic recombination and DNA repair, while the RuvA-RuvB complex plays an important role in the rescue of blocked DNA replication forks via replication fork reversal (RFR). RuvA specifically binds to HJ cruciform DNA, conferring on it an open structure. The RuvB hexamer acts as an ATP-dependent pump, pulling dsDNA into and through the RuvAB complex. RuvB forms 2 homohexamers on either side of HJ DNA bound by 1 or 2 RuvA tetramers; 4 subunits per hexamer contact DNA at a time. Coordinated motions by a converter formed by DNA-disengaged RuvB subunits stimulates ATP hydrolysis and nucleotide exchange. Immobilization of the converter enables RuvB to convert the ATP-contained energy into a lever motion, pulling 2 nucleotides of DNA out of the RuvA tetramer per ATP hydrolyzed, thus driving DNA branch migration. The RuvB motors rotate together with the DNA substrate, which together with the progressing nucleotide cycle form the mechanistic basis for DNA recombination by continuous HJ branch migration. Branch migration allows RuvC to scan DNA until it finds its consensus sequence, where it cleaves and resolves cruciform DNA. In Ehrlichia chaffeensis (strain ATCC CRL-10679 / Arkansas), this protein is Holliday junction branch migration complex subunit RuvB.